The sequence spans 619 residues: 1-deoxy-D-xylulose-5-phosphate synthase (619 aa).

Thiamine diphosphate-binding positions include H80 and 121 to 123 (GHS). D152 lines the Mg(2+) pocket. Thiamine diphosphate is bound by residues 153–154 (GA), N181, Y288, and E370. N181 serves as a coordination point for Mg(2+).

This sequence belongs to the transketolase family. DXPS subfamily. Homodimer. It depends on Mg(2+) as a cofactor. Thiamine diphosphate is required as a cofactor.

It carries out the reaction D-glyceraldehyde 3-phosphate + pyruvate + H(+) = 1-deoxy-D-xylulose 5-phosphate + CO2. Its pathway is metabolic intermediate biosynthesis; 1-deoxy-D-xylulose 5-phosphate biosynthesis; 1-deoxy-D-xylulose 5-phosphate from D-glyceraldehyde 3-phosphate and pyruvate: step 1/1. Functionally, catalyzes the acyloin condensation reaction between C atoms 2 and 3 of pyruvate and glyceraldehyde 3-phosphate to yield 1-deoxy-D-xylulose-5-phosphate (DXP). This Yersinia pseudotuberculosis serotype O:3 (strain YPIII) protein is 1-deoxy-D-xylulose-5-phosphate synthase.